The chain runs to 374 residues: Double homeobox protein 4C (374 aa).

Residues 1 to 10 (MALPTPSDST) show a composition bias toward polar residues. Disordered regions lie at residues 1–24 (MALPTPSDSTLPAEARGRGRRRRL), 72–102 (SRQLRQHRRESRPWPGRRGPPEGRRKRTAVT), and 218–374 (LQPS…YELL). DNA-binding regions (homeobox) lie at residues 19–78 (GRRR…LRQH) and 94–153 (GRRK…PGQG). A compositionally biased stretch (basic and acidic residues) spans 265–274 (KSREDRDPQR). Composition is skewed to low complexity over residues 278 to 302 (PGPCAVAQPGPAQAGPQGQGVLAPP) and 319 to 329 (AGAAWEPQAGA). A compositionally biased stretch (polar residues) spans 354 to 374 (QPLQEPGRSSTVTSSLLYELL).

As to quaternary structure, may interact with MYF5; regulates MYF5 expression. In terms of tissue distribution, expressed in muscles, as well as in primary myoblasts and myotubes (at protein level).

The protein localises to the nucleus. It is found in the cytoplasm. Its function is as follows. Down-regulates MYOD1 expression and may up-regulate MYF5 expression. May regulate microRNA (miRNA) transcription, up-regulating the expression of some myogenic miRNAs, including MIR1-1, MIR133A2, MIR133B and MIR206. Impairs the differentiation of myoblasts and may be involved in muscle regeneration. Reduces DUX4-induced nuclear localization of CTNNB1/beta-catenin and its subsequent activation of target genes. This Homo sapiens (Human) protein is Double homeobox protein 4C (DUX4L9).